The sequence spans 164 residues: Phosphopantetheine adenylyltransferase (164 aa).

Ser10 lines the substrate pocket. ATP is bound by residues 10-11 (SF) and His18. The substrate site is built by Lys42, Met74, and Arg88. Residues 89-91 (GLR), Glu99, and 124-130 (YFFVSAR) contribute to the ATP site.

This sequence belongs to the bacterial CoaD family. Homohexamer. It depends on Mg(2+) as a cofactor.

It localises to the cytoplasm. It catalyses the reaction (R)-4'-phosphopantetheine + ATP + H(+) = 3'-dephospho-CoA + diphosphate. The protein operates within cofactor biosynthesis; coenzyme A biosynthesis; CoA from (R)-pantothenate: step 4/5. Functionally, reversibly transfers an adenylyl group from ATP to 4'-phosphopantetheine, yielding dephospho-CoA (dPCoA) and pyrophosphate. The chain is Phosphopantetheine adenylyltransferase from Anaeromyxobacter dehalogenans (strain 2CP-C).